Here is a 987-residue protein sequence, read N- to C-terminus: Rho GTPase-activating protein 6 (987 aa).

A compositionally biased stretch (polar residues) spans 1 to 21; the sequence is MSAQSLLHSVFSCSSPASGGT. Disordered regions lie at residues 1 to 60, 76 to 117, and 144 to 170; these read MSAQ…RGST, SRLA…SGSF, and GSGSASSRSPASILSSSGGGPNGIFSS. Residue Ser37 is modified to Phosphoserine. Residues 44-57 are compositionally biased toward gly residues; the sequence is GGCGSEMGAEGGLR. Positions 100-115 are enriched in polar residues; sequence SSFSTPSTPQEKSPSG. A compositionally biased stretch (low complexity) spans 144 to 159; that stretch reads GSGSASSRSPASILSS. Ser265 bears the Phosphoserine mark. The disordered stretch occupies residues 324–363; it reads KQNKELSSSNSSLSSTSETPNESTSPNTPEPAPRARRRGA. The span at 328–350 shows a compositional bias: low complexity; that stretch reads ELSSSNSSLSSTSETPNESTSPN. Positions 344-354 match the SH3-binding motif; it reads NESTSPNTPEP. Ser365 is modified (phosphoserine). Positions 403-604 constitute a Rho-GAP domain; the sequence is LSLNPIYRQV…KMIENYEALF (202 aa). Residues 641 to 676 are disordered; that stretch reads DILQTEVSFSMGGRHSSTDSNKASSGDISPYDNNSP. The span at 658–676 shows a compositional bias: polar residues; the sequence is TDSNKASSGDISPYDNNSP. Ser669, Ser675, Ser682, Ser713, Ser758, Ser776, Ser781, Ser790, and Ser824 each carry phosphoserine. The interval 709-731 is disordered; it reads GHLSSPKSKSRESSPGPRLGKEM. 2 disordered regions span residues 825 to 847 and 863 to 953; these read TPHIQDGSRGTRRPAASSDPFLS and WLQS…QDKQ. Positions 939–948 are enriched in low complexity; the sequence is LSSAYSLSAS. Phosphoserine occurs at positions 941 and 944.

In terms of tissue distribution, expressed in retina and lung.

The protein resides in the cytoplasm. Its function is as follows. GTPase activator for the Rho-type GTPases by converting them to an inactive GDP-bound state. Could regulate the interactions of signaling molecules with the actin cytoskeleton. Promotes continuous elongation of cytoplasmic processes during cell motility and simultaneous retraction of the cell body changing the cell morphology. The sequence is that of Rho GTPase-activating protein 6 (Arhgap6) from Mus musculus (Mouse).